The chain runs to 421 residues: Atrochrysone carboxyl ACP thioesterase (421 aa).

The Zn(2+) site is built by histidine 207, histidine 209, aspartate 211, and histidine 212. The active-site Proton donor/acceptor is the aspartate 211.

Belongs to the metallo-beta-lactamase superfamily. The cofactor is Zn(2+). Specifically expressed in conidia.

It catalyses the reaction atrochrysone carboxyl-[ACP] + H2O = atrochrysone carboxylate + holo-[ACP] + H(+). Its pathway is secondary metabolite biosynthesis. Atrochrysone carboxyl ACP thioesterase; part of the gene cluster that mediates the biosynthesis of trypacidin, a mycotoxin with antiprotozoal activity and that plays a role in the infection process. The pathway begins with the synthesis of atrochrysone thioester by the polyketide synthase (PKS) tpcC. The atrochrysone carboxyl ACP thioesterase tpcB then breaks the thioester bond and releases the atrochrysone carboxylic acid from tpcC. The decarboxylase tpcK converts atrochrysone carboxylic acid to atrochrysone which is further reduced into emodin anthrone. The next step is performed by the emodin anthrone oxygenase tpcL that catalyzes the oxidation of emodin anthrone to emodin. Emodin O-methyltransferase encoded by tpcA catalyzes methylation of the 8-hydroxy group of emodin to form questin. Ring cleavage of questin by questin oxidase tpcI leads to desmethylsulochrin via several intermediates including questin epoxide. Another methylation step catalyzed by tpcM leads to the formation of sulochrin which is further converted to monomethylsulfochrin by tpcH. Finally, the tpcJ catalyzes the conversion of monomethylsulfochrin to trypacidin. Trypacidin is toxic for human pulmonary and bronchial epithelial cells by initiating the intracellular formation of nitric oxide (NO) and hydrogen peroxide (H(2)O(2)), thus triggering host necrotic cell death. The trypacidin pathway is also able to produce endocrocin via a distinct route from the endocrocin Enc pathway. The sequence is that of Atrochrysone carboxyl ACP thioesterase from Aspergillus fumigatus (strain ATCC MYA-4609 / CBS 101355 / FGSC A1100 / Af293) (Neosartorya fumigata).